Consider the following 1822-residue polypeptide: Signal-induced proliferation-associated 1-like protein 1 (1822 aa).

Disordered regions lie at residues 1-30 and 47-125; these read MTSL…PKVH and GSSV…VSLN. The segment covering 84 to 94 has biased composition (basic and acidic residues); sequence PPRKENVKESS. Low complexity predominate over residues 95 to 125; that stretch reads RSSQEIETSSCLESLSSKGSPVSQGSSVSLN. Ser-162, Ser-187, Ser-193, Ser-208, Ser-255, and Ser-288 each carry phosphoserine. Residues 277 to 297 are disordered; that stretch reads EREKPLKRRSKSETGDSSIFR. The Rap-GAP domain occupies 638–855; the sequence is FMKLDEQGLN…RTRQEYLKDL (218 aa). Positions 992–1068 constitute a PDZ domain; it reads EMTLRRNGLG…VKVVIIPPHD (77 aa). Phosphoserine is present on residues Ser-1117, Ser-1126, Ser-1155, Ser-1166, Ser-1188, Ser-1209, and Ser-1220. The tract at residues 1134–1165 is disordered; the sequence is AGKGDGKMPLPERAANIPRSISSDGRPLERRL. The disordered stretch occupies residues 1183–1252; sequence SQCRNSPSNL…WQRSEDSLAD (70 aa). Residues 1188–1198 are compositionally biased toward low complexity; the sequence is SPSNLSSSSET. The span at 1225-1244 shows a compositional bias: polar residues; that stretch reads DRQNTQSDIGGSGKSTPSWQ. Phosphoserine occurs at positions 1273 and 1288. The interval 1286–1324 is disordered; sequence HLSPNKQGHSDSHYSSHSSSNTLSSNASSAHSDEKWYDG. The segment covering 1300–1315 has biased composition (low complexity); that stretch reads SSHSSSNTLSSNASSA. Position 1344 is a phosphoserine; by PLK2 (Ser-1344). Position 1348 is a phosphothreonine; by PLK2 (Thr-1348). A compositionally biased stretch (low complexity) spans 1358–1367; it reads TASLGASTSS. A disordered region spans residues 1358-1382; that stretch reads TASLGASTSSPRSGPGKEKVAPLWH. Phosphoserine; by CDK5 is present on Ser-1367. Ser-1384 bears the Phosphoserine mark. Basic and acidic residues predominate over residues 1395–1407; it reads LETEGHGMDRKTE. The disordered stretch occupies residues 1395–1493; it reads LETEGHGMDR…SSSGPRTFYP (99 aa). Ser-1408, Ser-1409, Ser-1430, Ser-1449, and Ser-1451 each carry phosphoserine. Residues 1417 to 1436 show a composition bias toward polar residues; it reads KSQGGSSPLTRENSTFSIND. Composition is skewed to low complexity over residues 1437-1451 and 1471-1486; these read ATSH…HSAS and SSQL…SSSS. Phosphoserine occurs at positions 1546 and 1567. The segment at 1567–1595 is disordered; that stretch reads SPTPESQKNFKFHGLSSPQSPFPSTPTSR. Thr-1569 is subject to Phosphothreonine. A phosphoserine mark is found at Ser-1572, Ser-1583, Ser-1586, Ser-1603, and Ser-1606. Residue Arg-1619 is modified to Asymmetric dimethylarginine. 8 positions are modified to phosphoserine: Ser-1621, Ser-1665, Ser-1668, Ser-1726, Ser-1729, Ser-1746, Ser-1747, and Ser-1752. The stretch at 1753 to 1813 forms a coiled coil; that stretch reads PTLASKVDQL…ASDKLKKFTE (61 aa).

Interacts (via PDZ domain) with EPHA4 (via PDZ motif); controls neuronal morphology through regulation of the RAP1 (RAP1A or RAP1B) and RAP2 (RAP2A, RAP2B or RAP2C) GTPases. Interacts with DLG4, PDLIM5, PDLIM7 and LZTS3. Interacts with the actin cytoskeleton. In terms of processing, ubiquitinated and degraded by the SCF(BTRC) following phosphorylation by PLK2. Post-translationally, phosphorylated at Ser-1367 by CDK5, creating a docking site for the POLO box domains of PLK2. Subsequently, PLK2 binds and phosphorylates SIPA1L1, leading to ubiquitination and degradation by the proteasome. As to expression, detected in brain (at protein level).

It localises to the cytoplasm. Its subcellular location is the cytoskeleton. The protein localises to the postsynaptic density. It is found in the synapse. The protein resides in the synaptosome. Stimulates the GTPase activity of RAP2A. Promotes reorganization of the actin cytoskeleton and recruits DLG4 to F-actin. Contributes to the regulation of dendritic spine morphogenesis. The chain is Signal-induced proliferation-associated 1-like protein 1 (Sipa1l1) from Rattus norvegicus (Rat).